We begin with the raw amino-acid sequence, 248 residues long: Ubiquinone/menaquinone biosynthesis C-methyltransferase UbiE (248 aa).

Residues Thr-71, Asp-92, and 120–121 (DA) contribute to the S-adenosyl-L-methionine site.

It belongs to the class I-like SAM-binding methyltransferase superfamily. MenG/UbiE family.

The catalysed reaction is a 2-demethylmenaquinol + S-adenosyl-L-methionine = a menaquinol + S-adenosyl-L-homocysteine + H(+). It catalyses the reaction a 2-methoxy-6-(all-trans-polyprenyl)benzene-1,4-diol + S-adenosyl-L-methionine = a 5-methoxy-2-methyl-3-(all-trans-polyprenyl)benzene-1,4-diol + S-adenosyl-L-homocysteine + H(+). It participates in quinol/quinone metabolism; menaquinone biosynthesis; menaquinol from 1,4-dihydroxy-2-naphthoate: step 2/2. Its pathway is cofactor biosynthesis; ubiquinone biosynthesis. Methyltransferase required for the conversion of demethylmenaquinol (DMKH2) to menaquinol (MKH2) and the conversion of 2-polyprenyl-6-methoxy-1,4-benzoquinol (DDMQH2) to 2-polyprenyl-3-methyl-6-methoxy-1,4-benzoquinol (DMQH2). This Methylococcus capsulatus (strain ATCC 33009 / NCIMB 11132 / Bath) protein is Ubiquinone/menaquinone biosynthesis C-methyltransferase UbiE.